A 391-amino-acid polypeptide reads, in one-letter code: Matrix metalloproteinase-23 (391 aa).

The Cytoplasmic segment spans residues 1 to 18; that stretch reads MGCRACLRPEASGAVQGR. A propeptide spanning residues 1-79 is cleaved from the precursor; the sequence is MGCRACLRPE…LTMSVTRRRR (79 aa). Residues 19–39 form a helical membrane-spanning segment; the sequence is WLGAALSGLCLLSALALLEWL. Residues 40-391 are Lumenal-facing; the sequence is GAPTETAWRA…TYSWRVRVRN (352 aa). Residues asparagine 93 and asparagine 149 are each glycosylated (N-linked (GlcNAc...) asparagine). Position 212 (histidine 212) interacts with Zn(2+). Glutamate 213 is a catalytic residue. Histidine 216 and histidine 222 together coordinate Zn(2+). Asparagine 233 carries N-linked (GlcNAc...) asparagine glycosylation. The 35-residue stretch at 256–290 folds into the ShKT domain; it reads CLDRIFVCASWARKGFCDVRQRLMKRLCPRSCDFC. Disulfide bonds link cysteine 256-cysteine 290, cysteine 263-cysteine 283, and cysteine 272-cysteine 287. The Ig-like C2-type domain occupies 298-383; it reads VATTTSPTRT…RRHQRVLSTY (86 aa). An N-linked (GlcNAc...) asparagine glycan is attached at asparagine 317. Cysteine 322 and cysteine 371 are oxidised to a cystine.

The protein belongs to the peptidase M10A family. Zn(2+) is required as a cofactor. In terms of processing, N-glycosylated. Proteolytic cleavage might yield an active form. Expressed at relatively high level in heart, lung and spleen. Not detected in brain, liver, skeletal muscle, kidney and testis.

It is found in the endoplasmic reticulum membrane. The protein resides in the membrane. Inhibited by TIMP2. Functionally, protease. May regulate the surface expression of some potassium channels by retaining them in the endoplasmic reticulum. The protein is Matrix metalloproteinase-23 (Mmp23) of Mus musculus (Mouse).